The chain runs to 166 residues: Interferon gamma (166 aa).

Residues 1 to 23 (MSYTTYFLAFQLCVTLCFSGSYC) form the signal peptide. A Pyrrolidone carboxylic acid modification is found at Gln-24. N-linked (GlcNAc...) asparagine glycosylation is found at Asn-39 and Asn-106.

Belongs to the type II (or gamma) interferon family. In terms of assembly, homodimer. Interacts with IFNGR1 (via extracellular domain); this interaction promotes IFNGR1 dimerization. In terms of tissue distribution, released primarily from activated T lymphocytes.

The protein localises to the secreted. Type II interferon produced by immune cells such as T-cells and NK cells that plays crucial roles in antimicrobial, antiviral, and antitumor responses by activating effector immune cells and enhancing antigen presentation. Primarily signals through the JAK-STAT pathway after interaction with its receptor IFNGR1 to affect gene regulation. Upon IFNG binding, IFNGR1 intracellular domain opens out to allow association of downstream signaling components JAK2, JAK1 and STAT1, leading to STAT1 activation, nuclear translocation and transcription of IFNG-regulated genes. Many of the induced genes are transcription factors such as IRF1 that are able to further drive regulation of a next wave of transcription. Plays a role in class I antigen presentation pathway by inducing a replacement of catalytic proteasome subunits with immunoproteasome subunits. In turn, increases the quantity, quality, and repertoire of peptides for class I MHC loading. Increases the efficiency of peptide generation also by inducing the expression of activator PA28 that associates with the proteasome and alters its proteolytic cleavage preference. Up-regulates as well MHC II complexes on the cell surface by promoting expression of several key molecules such as cathepsins B/CTSB, H/CTSH, and L/CTSL. Participates in the regulation of hematopoietic stem cells during development and under homeostatic conditions by affecting their development, quiescence, and differentiation. In Sus scrofa (Pig), this protein is Interferon gamma (IFNG).